The following is a 533-amino-acid chain: DnaJ homolog subfamily C member 21 (533 aa).

The J domain maps to 3-70; the sequence is CHYEALGVRR…ERAWYDNHRE (68 aa). 3 disordered regions span residues 278–311, 327–473, and 503–533; these read QFGD…AELY, KAMR…RVPA, and KATG…RKNR. 2 positions are modified to phosphoserine: Ser283 and Ser302. A compositionally biased stretch (basic and acidic residues) spans 291–302; sequence QELRDGQDGKDS. A C2H2-type 1 zinc finger spans residues 315–339; that stretch reads YCPACDKSFKTEKAMRNHEKSKKHR. A compositionally biased stretch (polar residues) spans 357 to 369; the sequence is SGPQTDENSLNAN. Phosphoserine is present on Ser370. Over residues 381 to 392 the composition is skewed to basic residues; it reads KLSRKQKKKKQK. Over residues 393-403 the composition is skewed to polar residues; it reads PAQNYDDNFNE. The segment covering 455 to 464 has biased composition (basic residues); the sequence is SKPKGKKAKD. Residues 484–508 form a C2H2-type 2 zinc finger; that stretch reads SCTTCHSEFPSRNKLFDHLKATGHA. Phosphoserine is present on Ser512. Low complexity predominate over residues 512 to 523; that stretch reads SSSTSLNSVTNS. A compositionally biased stretch (basic residues) spans 524–533; sequence RNKKEKRKNR.

In terms of assembly, interacts with HSPA8, PA2G4 and ZNF622.

It is found in the cytoplasm. Its subcellular location is the nucleus. The protein resides in the nucleolus. Functionally, may act as a co-chaperone for HSP70. May play a role in ribosomal RNA (rRNA) biogenesis, possibly in the maturation of the 60S subunit. Binds the precursor 45S rRNA. This Bos taurus (Bovine) protein is DnaJ homolog subfamily C member 21 (DNAJC21).